The chain runs to 401 residues: Phosphoglycerate kinase (401 aa).

Substrate contacts are provided by residues 23 to 25 (DFN), Arg39, 62 to 65 (HLGR), Arg121, and Arg154. Residues Lys207, Gly298, Glu329, and 355 to 358 (GGDT) contribute to the ATP site.

It belongs to the phosphoglycerate kinase family. In terms of assembly, monomer.

Its subcellular location is the cytoplasm. It catalyses the reaction (2R)-3-phosphoglycerate + ATP = (2R)-3-phospho-glyceroyl phosphate + ADP. It participates in carbohydrate degradation; glycolysis; pyruvate from D-glyceraldehyde 3-phosphate: step 2/5. The polypeptide is Phosphoglycerate kinase (Campylobacter fetus subsp. fetus (strain 82-40)).